Consider the following 158-residue polypeptide: Cyclic pyranopterin monophosphate synthase (158 aa).

Residues 75–77 (LCH) and 113–114 (ME) each bind substrate. D128 is an active-site residue.

This sequence belongs to the MoaC family. In terms of assembly, homohexamer; trimer of dimers.

The enzyme catalyses (8S)-3',8-cyclo-7,8-dihydroguanosine 5'-triphosphate = cyclic pyranopterin phosphate + diphosphate. The protein operates within cofactor biosynthesis; molybdopterin biosynthesis. In terms of biological role, catalyzes the conversion of (8S)-3',8-cyclo-7,8-dihydroguanosine 5'-triphosphate to cyclic pyranopterin monophosphate (cPMP). The polypeptide is Cyclic pyranopterin monophosphate synthase (Acidiphilium cryptum (strain JF-5)).